We begin with the raw amino-acid sequence, 259 residues long: uncharacterized protein (259 aa).

The region spanning 110 to 259 (QMGHPLTAWG…VHTVFHYFLT (150 aa)) is the N-acetyltransferase domain.

In terms of biological role, may be involved in maturation of the outermost layer of the spore. This is an uncharacterized protein from Bacillus subtilis (strain 168).